We begin with the raw amino-acid sequence, 536 residues long: Serine protease inhibitor 28Dc (536 aa).

The first 16 residues, 1 to 16 (MWRLLLALLLVSSVCC), serve as a signal peptide directing secretion. A glycan (N-linked (GlcNAc...) asparagine) is linked at Asn-355.

It belongs to the serpin family.

The protein resides in the secreted. In terms of biological role, serine protease inhibitor which is required for pupal viability and plays an essential role in regulating the melanization reaction. Inhibits spontaneous melanization and appears to be involved in the melanization immune response to physical wounding in larvae and adults. Acts by negatively regulating the Hayan-phenoloxidase (PPO1) cascade in the hemolymph and possibly the trachea. May function by controlling the initial release of the activated form of PPO1, phenoloxidase (PO) and thus maintains PO availability for processes such as wound response and pigmentation. This is Serine protease inhibitor 28Dc from Drosophila melanogaster (Fruit fly).